The following is a 673-amino-acid chain: MKQGIFMIKQQIEELRQLLRHHEYQYHVLDNPQIPDSEYDRLFHQLKALEQQYPEYASENSPTQRVGAKPLSNFAQVKHDIPMLSLDNAFSDEDFFAFVKRIQDRLIHVHHSLTFCCEPKLDGLAVSILYINGQLVQAATRGDGTTGEDITANIRTIRNIPLQLLTDNPPARLEVRGEVFMSQAGFEKLNKTALAKGEKTFANPRNAAAGSLRQLDPKITGQRPLMLNAYGIGIAEGVELPDTHFARLQWLKSIGIPVNNEIQLCHGIEKVLDFYRTIKQKRSSLGYDIDGTVLKINDIDLQQQLGFISKAPRWAIAYKFPAQEELTILNNVEFQVGRTGAITPVAKLEPVFVAGVTVSNATLHNGDEIARLDIAIGDTVIVRRAGDVIPQIIGVLHERRPENAKSIIFPSNCPVCDSVISKIEGEAVARCTGGLICAAQRKEALKHFVSRKAMDIDGIGAKLIEQLVERELVHTPADLFKLDQVTLMRLERMGAKSAENALASLAKAKKTTLARFIFALGIREVGETTALNLATHFKTLEAFENATFEQLQKVQDVGEVVAKRIRSFWSEPHNVAVVKDLIAQGIHWDDVEVKEVRDNPLKGKTVVLTGTLTKMGRSEAKEYLLQLGCKVSGSVSSKTDFVIAGESAGSKLTKATELGINILSENEFLALLA.

Residues 36–40 (DSEYD), 85–86 (SL), and Glu118 each bind NAD(+). The N6-AMP-lysine intermediate role is filled by Lys120. NAD(+)-binding residues include Arg141, Glu178, Lys295, and Lys319. Zn(2+) is bound by residues Cys413, Cys416, Cys431, and Cys437. Positions 596-673 (VRDNPLKGKT…SENEFLALLA (78 aa)) constitute a BRCT domain.

It belongs to the NAD-dependent DNA ligase family. LigA subfamily. It depends on Mg(2+) as a cofactor. Mn(2+) is required as a cofactor.

The enzyme catalyses NAD(+) + (deoxyribonucleotide)n-3'-hydroxyl + 5'-phospho-(deoxyribonucleotide)m = (deoxyribonucleotide)n+m + AMP + beta-nicotinamide D-nucleotide.. In terms of biological role, DNA ligase that catalyzes the formation of phosphodiester linkages between 5'-phosphoryl and 3'-hydroxyl groups in double-stranded DNA using NAD as a coenzyme and as the energy source for the reaction. It is essential for DNA replication and repair of damaged DNA. This Histophilus somni (strain 129Pt) (Haemophilus somnus) protein is DNA ligase.